We begin with the raw amino-acid sequence, 208 residues long: Uracil phosphoribosyltransferase (208 aa).

Residues R78, R103, and 130-138 (DPMLATGVS) each bind 5-phospho-alpha-D-ribose 1-diphosphate. Residues I193 and 198 to 200 (GDA) contribute to the uracil site. D199 is a binding site for 5-phospho-alpha-D-ribose 1-diphosphate.

The protein belongs to the UPRTase family. Mg(2+) is required as a cofactor.

The catalysed reaction is UMP + diphosphate = 5-phospho-alpha-D-ribose 1-diphosphate + uracil. It functions in the pathway pyrimidine metabolism; UMP biosynthesis via salvage pathway; UMP from uracil: step 1/1. Its activity is regulated as follows. Allosterically activated by GTP. Its function is as follows. Catalyzes the conversion of uracil and 5-phospho-alpha-D-ribose 1-diphosphate (PRPP) to UMP and diphosphate. This is Uracil phosphoribosyltransferase from Thermosipho melanesiensis (strain DSM 12029 / CIP 104789 / BI429).